We begin with the raw amino-acid sequence, 100 residues long: uncharacterized protein (100 aa).

This is an uncharacterized protein from Acidianus filamentous virus 2 (isolate Italy/Pozzuoli) (AFV-2).